The following is a 363-amino-acid chain: Dihydroorotate dehydrogenase (quinone) (363 aa).

FMN contacts are provided by residues 62–66 (AGYDK) and Thr-86. Substrate is bound at residue Lys-66. 111–115 (NRLGF) is a substrate binding site. FMN-binding residues include Asn-140 and Asn-171. Residue Asn-171 coordinates substrate. Ser-174 serves as the catalytic Nucleophile. Residue Asn-176 coordinates substrate. Lys-216 and Ser-244 together coordinate FMN. 245 to 246 (NT) contributes to the substrate binding site. FMN is bound by residues Gly-267, Gly-296, and 317–318 (YS).

This sequence belongs to the dihydroorotate dehydrogenase family. Type 2 subfamily. Monomer. FMN is required as a cofactor.

The protein resides in the cell membrane. It catalyses the reaction (S)-dihydroorotate + a quinone = orotate + a quinol. Its pathway is pyrimidine metabolism; UMP biosynthesis via de novo pathway; orotate from (S)-dihydroorotate (quinone route): step 1/1. Functionally, catalyzes the conversion of dihydroorotate to orotate with quinone as electron acceptor. This chain is Dihydroorotate dehydrogenase (quinone), found in Allorhizobium ampelinum (strain ATCC BAA-846 / DSM 112012 / S4) (Agrobacterium vitis (strain S4)).